A 279-amino-acid chain; its full sequence is Protoheme IX farnesyltransferase (279 aa).

9 consecutive transmembrane segments (helical) span residues 5-25 (LILL…AGYL), 33-53 (IAQA…AAAF), 84-103 (LAYS…LLLG), 108-125 (LFVF…TVIL), 133-153 (ILGG…LGAG), 159-179 (AVLI…ALAY), 201-221 (AAVA…MTLY), 222-242 (LAFG…VATI), and 256-276 (AMWK…LALI).

Belongs to the UbiA prenyltransferase family. Protoheme IX farnesyltransferase subfamily.

Its subcellular location is the cell membrane. The catalysed reaction is heme b + (2E,6E)-farnesyl diphosphate + H2O = Fe(II)-heme o + diphosphate. It functions in the pathway porphyrin-containing compound metabolism; heme O biosynthesis; heme O from protoheme: step 1/1. Converts heme B (protoheme IX) to heme O by substitution of the vinyl group on carbon 2 of heme B porphyrin ring with a hydroxyethyl farnesyl side group. The polypeptide is Protoheme IX farnesyltransferase (Pyrobaculum arsenaticum (strain DSM 13514 / JCM 11321 / PZ6)).